The following is a 1010-amino-acid chain: Peroxisome proliferator-activated receptor gamma coactivator 1-beta (1010 aa).

An abolishes DNA transcriptional activity when missing region spans residues 1–91; that stretch reads MAGNDCGALL…FFQIDSENEA (91 aa). The segment at 115–134 is disordered; the sequence is GLDEGDTPSCTPASPAPLSV. The LXXLL motif 1 motif lies at 140 to 144; that stretch reads LERLL. 2 positions are modified to phosphoserine: serine 145 and serine 148. Residues 156-160 carry the LXXLL motif 2 motif; it reads LQKLL. Disordered stretches follow at residues 165–214, 227–282, and 306–329; these read SPTA…RPCT, PRGK…QVPK, and PQRASEPIPQSCSSPLRKVPPRSR. Polar residues-rich tracts occupy residues 178 to 189 and 264 to 279; these read TWSQTSLSSRSQ and PQDSLGQDTANPNSAQ. The LXXLL motif 3 signature appears at 342 to 346; the sequence is LRELL. Polar residues predominate over residues 369–384; it reads TPQSRTRPPKDSQASP. Disordered stretches follow at residues 369–475, 517–567, and 590–674; these read TPQS…VCPV, GLTD…CLML, and GTAG…QKRP. Serine 383 carries the phosphoserine modification. Residues 411–428 show a composition bias toward basic and acidic residues; the sequence is LRLEVKRDVNKPARQKRE. A compositionally biased stretch (acidic residues) spans 429–449; it reads EDEEEEEEEEEEEEKEDEEEE. The segment covering 521 to 532 has biased composition (low complexity); sequence SSQGQQLPLGSQ. A compositionally biased stretch (basic and acidic residues) spans 604 to 618; the sequence is PMEEDPFKQDTKHSP. Polar residues-rich tracts occupy residues 619–638 and 659–670; these read GQDTAPSLPSPETLQLTATP and QHATTQPVSQAG. Serine 628 is modified (phosphoserine). An HCFC1-binding-motif (HBM) motif is present at residues 681–684; sequence DHDY. 2 disordered regions span residues 714–744 and 778–881; these read HQGATLPVETKTPRREADQNCDPTPKDSMQL and DTVF…KKRR. Positions 782 to 794 are enriched in low complexity; the sequence is EDSSSSSGESSFL. Positions 795–811 are enriched in acidic residues; it reads LEEEEEEGGEEDDEGED. Positions 832–852 are enriched in low complexity; that stretch reads SRQLCSRSRSSSGSSSCSSWS. The RRM domain occupies 889-963; sequence RVVYIRNLSG…RNEPSFHLSY (75 aa).

Interacts with estrogen receptor alpha/ESR1. Interacts with Sterol regulatory binding transcription factor 1/SREBF1, PPAR-alpha/PPARA, thyroid hormone receptor beta/THRB and host cell factor/HCFC1. Interacts with Estrogen-related receptor gamma/ESRRG and alpha/ESRRA. Interacts with PRDM16. Ubiquitous with higher expression in heart, brown adipose tissue.

Its subcellular location is the nucleus. Plays a role of stimulator of transcription factors and nuclear receptors activities. Activates transcriptional activity of estrogen receptor alpha, nuclear respiratory factor 1 (NRF1) and glucocorticoid receptor in the presence of glucocorticoids. May play a role in constitutive non-adrenergic-mediated mitochondrial biogenesis as suggested by increased basal oxygen consumption and mitochondrial number when overexpressed. May be part of the pathways regulating the elevation of gluconeogenesis, beta-oxidation of fatty acids and ketogenesis during fasting. Stimulates SREBP-mediated lipogenic gene expression in the liver. Induces energy expenditure and antagonizes obesity when overexpressed. Also induces the expression of mitochondrial genes involved in oxidative metabolism. Induces the expression of PERM1 in the skeletal muscle in an ESRRA-dependent manner. This is Peroxisome proliferator-activated receptor gamma coactivator 1-beta (Ppargc1b) from Rattus norvegicus (Rat).